Consider the following 837-residue polypeptide: Protein translocase subunit SecA 1 (837 aa).

Residues Q85, 103–107 (GEGKT), and D492 each bind ATP. Over residues 787–806 (QEVAKGEAVHPKEDGEEPKK) the composition is skewed to basic and acidic residues. The tract at residues 787–813 (QEVAKGEAVHPKEDGEEPKKKPIRKAV) is disordered. Zn(2+) is bound by residues C821, C823, C832, and C833.

It belongs to the SecA family. Monomer and homodimer. Part of the essential Sec protein translocation apparatus which comprises SecA, SecYEG and auxiliary proteins SecDF. Other proteins may also be involved. Requires Zn(2+) as cofactor.

It is found in the cell membrane. The protein resides in the cytoplasm. The enzyme catalyses ATP + H2O + cellular proteinSide 1 = ADP + phosphate + cellular proteinSide 2.. Its function is as follows. Part of the Sec protein translocase complex. Interacts with the SecYEG preprotein conducting channel. Has a central role in coupling the hydrolysis of ATP to the transfer of proteins into and across the cell membrane, serving as an ATP-driven molecular motor driving the stepwise translocation of polypeptide chains across the membrane. This is Protein translocase subunit SecA 1 from Geobacillus thermodenitrificans (strain NG80-2).